Consider the following 213-residue polypeptide: NADH dehydrogenase [ubiquinone] iron-sulfur protein 7, mitochondrial (213 aa).

Residues 1 to 38 (MAALSAPGLCGFRILGLRSSVGTAVQARGVHQSVATDG) constitute a mitochondrion transit peptide. The tract at residues 32–53 (QSVATDGPSSTQPALPKARAVA) is disordered. Positions 33–44 (SVATDGPSSTQP) are enriched in polar residues. Residues Cys88 and Cys89 each coordinate [4Fe-4S] cluster. At Arg111 the chain carries Hydroxyarginine. Residues Cys153 and Cys183 each coordinate [4Fe-4S] cluster.

It belongs to the complex I 20 kDa subunit family. As to quaternary structure, core subunit of respiratory chain NADH dehydrogenase (Complex I) which is composed of 45 different subunits. This is a component of the iron-sulfur (IP) fragment of the enzyme. It depends on [4Fe-4S] cluster as a cofactor. Post-translationally, hydroxylated ar Arg-111 by NDUFAF5 early in the pathway of assembly of complex I, before the formation of the juncture between peripheral and membrane arms.

It localises to the mitochondrion inner membrane. It carries out the reaction a ubiquinone + NADH + 5 H(+)(in) = a ubiquinol + NAD(+) + 4 H(+)(out). Functionally, core subunit of the mitochondrial membrane respiratory chain NADH dehydrogenase (Complex I) which catalyzes electron transfer from NADH through the respiratory chain, using ubiquinone as an electron acceptor. Essential for the catalytic activity of complex I. This chain is NADH dehydrogenase [ubiquinone] iron-sulfur protein 7, mitochondrial (NDUFS7), found in Gorilla gorilla gorilla (Western lowland gorilla).